Reading from the N-terminus, the 199-residue chain is Large ribosomal subunit protein bL25 (199 aa).

Belongs to the bacterial ribosomal protein bL25 family. CTC subfamily. As to quaternary structure, part of the 50S ribosomal subunit; part of the 5S rRNA/L5/L18/L25 subcomplex. Contacts the 5S rRNA. Binds to the 5S rRNA independently of L5 and L18.

Its function is as follows. This is one of the proteins that binds to the 5S RNA in the ribosome where it forms part of the central protuberance. The polypeptide is Large ribosomal subunit protein bL25 (Chlorobaculum tepidum (strain ATCC 49652 / DSM 12025 / NBRC 103806 / TLS) (Chlorobium tepidum)).